The sequence spans 443 residues: Zinc finger CCCH domain-containing protein 63 (443 aa).

Disordered regions lie at residues 1–29 (MDFDLNGGNKRVFNRLGGGGGSTRPMAPT) and 56–99 (LPGP…SSSW). 2 consecutive C3H1-type zinc fingers follow at residues 30–56 (DTRQKVCFHWRAGRCNRSPCPYLHREL) and 109–136 (TKTEKVCNFWVDGNCTYGDKCRYLHCWS). WD repeat units lie at residues 149 to 190 (GHEK…GVLK), 228 to 265 (GPVGQVYSLVVGTDLLFAGTQDGSILAWRYNAATNCFE), 272 to 311 (GHTLAVVTLYVGANRLYSGSMDKTIKVWSLDNLQCIQTLT), 313 to 349 (HSSVVMSLICWDQFLLSCSLDNTVKIWAAIEGGNLEV), 354 to 396 (KEEH…LFIR), and 404 to 442 (FAKQEIRAIQIGPGGIFFTGDGTGQVKVWKWCTEPTAAL).

The protein is Zinc finger CCCH domain-containing protein 63 (ZFWD2) of Arabidopsis thaliana (Mouse-ear cress).